Reading from the N-terminus, the 995-residue chain is Endo-beta-N-acetylglucosaminidase EndoS (995 aa).

An N-terminal signal peptide occupies residues 1 to 36 (MDKHLLVKRTLGCVCAATLMGAALATHHDSLNTVKA). Residues 112–432 (SLYGGYFRTW…KDATDNIFHS (321 aa)) form the GH18 domain. His151, Trp153, and Arg186 together coordinate a glycoprotein. Glu235 (proton donor) is an active-site residue. A glycoprotein contacts are provided by Asp237, Gln303, Tyr305, Glu349, Glu350, Asn356, and Tyr402. 4 LRR repeats span residues 437–460 (SKAL…DFPD), 478–503 (LERF…KFKK), 562–585 (LTGL…DAAT), and 586–609 (LTSL…ENRQ). Residues 765–923 (MVNLAEGATV…VPELQILGYP (159 aa)) are carbohydrate-binding module (CBM). Ca(2+) is bound by residues Lys786, Asp789, Gln791, Pro915, and Glu916. The three-helix bundle (3H) stretch occupies residues 924–995 (LPNADTIMKT…CIEKRQLLKK (72 aa)).

Belongs to the glycosyl hydrolase 18 family. In terms of processing, cleaved by SpeB protease; leading to loss of endoglucosidase activity. EndoS is produced and secreted prior to SpeB, suggesting that it is degraded after acting as a host immune evasion factor.

It localises to the secreted. The protein resides in the host extracellular space. The catalysed reaction is an N(4)-(oligosaccharide-(1-&gt;3)-[oligosaccharide-(1-&gt;6)]-beta-D-Man-(1-&gt;4)-beta-D-GlcNAc-(1-&gt;4)-alpha-D-GlcNAc)-L-asparaginyl-[protein] + H2O = an oligosaccharide-(1-&gt;3)-[oligosaccharide-(1-&gt;6)]-beta-D-Man-(1-&gt;4)-D-GlcNAc + N(4)-(N-acetyl-beta-D-glucosaminyl)-L-asparaginyl-[protein]. In terms of biological role, endoglucosidase that acts as a host immune evasion factor by mediating hydrolysis of the N-linked glycan from the Fc region of host immunoglobulin-gamma (IgG) during infection. Specifically catalyzes the hydrolysis of the beta-1,4 linkage between the first two N-acetylglucosamine residues of the complex-type N-linked glycan located on 'Asn-297' of the Fc region of IgG antibodies (IGHG1, IGHG2, IGHG3 or IGHG4), thereby preventing interaction between IgGs and Fc receptors and ability to activate the complement pathway. Shows a specificity for biantennary complex type N-glycans; does neither cleave larger complex type glycans nor oligomannose and nor hybrid-type glycans. Specifically acts on IgGs; does not act on immunoglobulin alpha, beta, delta or mu. This Streptococcus pyogenes serotype M1 protein is Endo-beta-N-acetylglucosaminidase EndoS.